A 69-amino-acid polypeptide reads, in one-letter code: DNA-directed RNA polymerase subunit omega (69 aa).

It belongs to the RNA polymerase subunit omega family. The RNAP catalytic core consists of 2 alpha, 1 beta, 1 beta' and 1 omega subunit. When a sigma factor is associated with the core the holoenzyme is formed, which can initiate transcription.

The enzyme catalyses RNA(n) + a ribonucleoside 5'-triphosphate = RNA(n+1) + diphosphate. Its function is as follows. Promotes RNA polymerase assembly. Latches the N- and C-terminal regions of the beta' subunit thereby facilitating its interaction with the beta and alpha subunits. This chain is DNA-directed RNA polymerase subunit omega, found in Exiguobacterium sp. (strain ATCC BAA-1283 / AT1b).